A 446-amino-acid chain; its full sequence is Exodeoxyribonuclease 7 large subunit (446 aa).

It belongs to the XseA family. In terms of assembly, heterooligomer composed of large and small subunits.

It localises to the cytoplasm. It carries out the reaction Exonucleolytic cleavage in either 5'- to 3'- or 3'- to 5'-direction to yield nucleoside 5'-phosphates.. In terms of biological role, bidirectionally degrades single-stranded DNA into large acid-insoluble oligonucleotides, which are then degraded further into small acid-soluble oligonucleotides. This chain is Exodeoxyribonuclease 7 large subunit, found in Streptococcus pyogenes serotype M3 (strain ATCC BAA-595 / MGAS315).